The primary structure comprises 477 residues: Aspartyl/glutamyl-tRNA(Asn/Gln) amidotransferase subunit B (477 aa).

Belongs to the GatB/GatE family. GatB subfamily. In terms of assembly, heterotrimer of A, B and C subunits.

It carries out the reaction L-glutamyl-tRNA(Gln) + L-glutamine + ATP + H2O = L-glutaminyl-tRNA(Gln) + L-glutamate + ADP + phosphate + H(+). The catalysed reaction is L-aspartyl-tRNA(Asn) + L-glutamine + ATP + H2O = L-asparaginyl-tRNA(Asn) + L-glutamate + ADP + phosphate + 2 H(+). Its function is as follows. Allows the formation of correctly charged Asn-tRNA(Asn) or Gln-tRNA(Gln) through the transamidation of misacylated Asp-tRNA(Asn) or Glu-tRNA(Gln) in organisms which lack either or both of asparaginyl-tRNA or glutaminyl-tRNA synthetases. The reaction takes place in the presence of glutamine and ATP through an activated phospho-Asp-tRNA(Asn) or phospho-Glu-tRNA(Gln). This Lawsonia intracellularis (strain PHE/MN1-00) protein is Aspartyl/glutamyl-tRNA(Asn/Gln) amidotransferase subunit B.